The chain runs to 545 residues: Chaperonin GroEL (545 aa).

Residues 30–33 (TLGP), Lys51, 87–91 (DGTTT), Gly415, 483–485 (NAA), and Asp499 contribute to the ATP site.

This sequence belongs to the chaperonin (HSP60) family. Forms a cylinder of 14 subunits composed of two heptameric rings stacked back-to-back. Interacts with the co-chaperonin GroES.

Its subcellular location is the cytoplasm. The enzyme catalyses ATP + H2O + a folded polypeptide = ADP + phosphate + an unfolded polypeptide.. Its function is as follows. Together with its co-chaperonin GroES, plays an essential role in assisting protein folding. The GroEL-GroES system forms a nano-cage that allows encapsulation of the non-native substrate proteins and provides a physical environment optimized to promote and accelerate protein folding. This is Chaperonin GroEL from Aquifex aeolicus (strain VF5).